Here is a 142-residue protein sequence, read N- to C-terminus: Snaclec GPIB-binding protein subunit alpha (142 aa).

3 disulfide bridges follow: cysteine 6-cysteine 17, cysteine 39-cysteine 136, and cysteine 111-cysteine 128. The C-type lectin domain maps to 13-137 (HRQYCYKFFQ…CVEGNPFVCK (125 aa)).

It belongs to the snaclec family. In terms of assembly, heterodimer of subunits alpha and beta; disulfide-linked. Expressed by the venom gland.

It localises to the secreted. Its function is as follows. Binds to platelet GPIb (subunit alpha) (GP1BA) and functions as a receptor blocker for vWF binding to GPIb. The platelet GPIb-binding site resides on the GPIB-BP subunit beta and not on the alpha subunit. At a final concentration of 104 nM totally abolishes vWF-dependent shear-induced platelet aggregation (SIPA) at a high shear stress, but had no effect on SIPA at a low shear stress. In Bothrops jararaca (Jararaca), this protein is Snaclec GPIB-binding protein subunit alpha.